The following is a 182-amino-acid chain: Adenine phosphoribosyltransferase (182 aa).

Belongs to the purine/pyrimidine phosphoribosyltransferase family. Homodimer.

The protein localises to the cytoplasm. The catalysed reaction is AMP + diphosphate = 5-phospho-alpha-D-ribose 1-diphosphate + adenine. Its pathway is purine metabolism; AMP biosynthesis via salvage pathway; AMP from adenine: step 1/1. Functionally, catalyzes a salvage reaction resulting in the formation of AMP, that is energically less costly than de novo synthesis. This Campylobacter jejuni subsp. jejuni serotype O:23/36 (strain 81-176) protein is Adenine phosphoribosyltransferase.